We begin with the raw amino-acid sequence, 392 residues long: Nicotinate phosphoribosyltransferase (392 aa).

Position 214 is a phosphohistidine; by autocatalysis (histidine 214).

This sequence belongs to the NAPRTase family. Transiently phosphorylated on a His residue during the reaction cycle. Phosphorylation strongly increases the affinity for substrates and increases the rate of nicotinate D-ribonucleotide production. Dephosphorylation regenerates the low-affinity form of the enzyme, leading to product release.

The enzyme catalyses nicotinate + 5-phospho-alpha-D-ribose 1-diphosphate + ATP + H2O = nicotinate beta-D-ribonucleotide + ADP + phosphate + diphosphate. It participates in cofactor biosynthesis; NAD(+) biosynthesis; nicotinate D-ribonucleotide from nicotinate: step 1/1. In terms of biological role, catalyzes the synthesis of beta-nicotinate D-ribonucleotide from nicotinate and 5-phospho-D-ribose 1-phosphate at the expense of ATP. This Xanthomonas axonopodis pv. citri (strain 306) protein is Nicotinate phosphoribosyltransferase.